The chain runs to 614 residues: Protein YehQ (614 aa).

2 SWIM-type zinc fingers span residues 55 to 89 (VRTQ…LSYQ) and 151 to 185 (SDVR…QAFV).

This Escherichia coli (strain K12) protein is Protein YehQ (yehQ).